The sequence spans 261 residues: Acyl-[acyl-carrier-protein]--UDP-N-acetylglucosamine O-acyltransferase (261 aa).

It belongs to the transferase hexapeptide repeat family. LpxA subfamily. Homotrimer.

It is found in the cytoplasm. It carries out the reaction a (3R)-hydroxyacyl-[ACP] + UDP-N-acetyl-alpha-D-glucosamine = a UDP-3-O-[(3R)-3-hydroxyacyl]-N-acetyl-alpha-D-glucosamine + holo-[ACP]. Its pathway is glycolipid biosynthesis; lipid IV(A) biosynthesis; lipid IV(A) from (3R)-3-hydroxytetradecanoyl-[acyl-carrier-protein] and UDP-N-acetyl-alpha-D-glucosamine: step 1/6. Its function is as follows. Involved in the biosynthesis of lipid A, a phosphorylated glycolipid that anchors the lipopolysaccharide to the outer membrane of the cell. This Paracoccus denitrificans (strain Pd 1222) protein is Acyl-[acyl-carrier-protein]--UDP-N-acetylglucosamine O-acyltransferase.